Here is a 416-residue protein sequence, read N- to C-terminus: Nucleoside transporter 1 (416 aa).

The span at 1 to 26 shows a compositional bias: basic and acidic residues; that stretch reads MSISKESSKTMIDIEKKGGEGKDGKG. The tract at residues 1–28 is disordered; it reads MSISKESSKTMIDIEKKGGEGKDGKGGS. Topologically, residues 1–35 are cytoplasmic; that stretch reads MSISKESSKTMIDIEKKGGEGKDGKGGSKMTKNEQ. A helical transmembrane segment spans residues 36–58; it reads FLLPFTFILIGLSSLNVWNTALG. The Extracellular segment spans residues 59–64; the sequence is LNINFK. The helical transmembrane segment at 65-83 threads the bilayer; the sequence is YNTFQITGLVCSSIIALFV. Topologically, residues 84 to 87 are cytoplasmic; sequence KVPK. The helical transmembrane segment at 88 to 107 threads the bilayer; it reads MLLPFALGGLAMLCAGFQIA. Residues 108–119 lie on the Extracellular side of the membrane; sequence HQCFTFEQFDTY. Residues 120–139 traverse the membrane as a helical segment; the sequence is CLIAFIVIGIMAGLAQTIAF. The Cytoplasmic segment spans residues 140-148; sequence SVGTTMEEN. The chain crosses the membrane as a helical span at residues 149–171; that stretch reads MGGYMSAGIGISGVFIFIINLLL. The Extracellular portion of the chain corresponds to 172–187; that stretch reads DQIVPDQKKFNVNEAK. Residues 188–210 traverse the membrane as a helical segment; the sequence is LLYLFLICELCLVLAIIFSVCNL. Topologically, residues 211–241 are cytoplasmic; the sequence is ELSSSKTSKEEEYSDKEQGLSYLELLKDSYK. A helical transmembrane segment spans residues 242–261; it reads AILAMFLVNWLSLQLFPGVG. Over 262 to 273 the chain is Extracellular; sequence HKKWQESHNISD. The chain crosses the membrane as a helical span at residues 274–292; the sequence is YNVTLIVGMFQVFDFVSRY. Topologically, residues 293-311 are cytoplasmic; the sequence is PPNLSHMKIFKWFTFSLNK. Residues 312–331 form a helical membrane-spanning segment; sequence LLLLNFLRLLFIPWFVINAA. Residues 332–343 lie on the Extracellular side of the membrane; that stretch reads CDLPIFTNIVQQ. A helical membrane pass occupies residues 344–366; that stretch reads CVCMAMLAFTNGWFNTVPFLVFV. Topologically, residues 367 to 380 are cytoplasmic; that stretch reads QELKKAKKKKDIET. Residues 381 to 403 form a helical membrane-spanning segment; the sequence is ISTFLVVAMFVGLFMGIWTTYIY. The Extracellular segment spans residues 404–416; the sequence is DFFPIVIKRYVVP.

Belongs to the SLC29A/ENT transporter (TC 2.A.57) family.

The protein localises to the cell membrane. The catalysed reaction is inosine(in) = inosine(out). The enzyme catalyses adenosine(in) = adenosine(out). It catalyses the reaction hypoxanthine(out) = hypoxanthine(in). It carries out the reaction guanosine(in) = guanosine(out). The catalysed reaction is guanine(out) = guanine(in). The enzyme catalyses thymidine(in) = thymidine(out). It catalyses the reaction uridine(out) = uridine(in). It carries out the reaction uracil(in) = uracil(out). The catalysed reaction is thymine(out) = thymine(in). The enzyme catalyses adenine(out) = adenine(in). It catalyses the reaction cytosine(out) = cytosine(in). It carries out the reaction xanthine(out) = xanthine(in). In terms of biological role, nucleoside and nucleobase transporter with a broad substrate specificity. In Plasmodium vivax (strain Salvador I), this protein is Nucleoside transporter 1.